A 1248-amino-acid chain; its full sequence is Ankyrin repeat and sterile alpha motif domain-containing protein 1B (1248 aa).

ANK repeat units follow at residues 2-31, 58-87, 91-120, 127-156, 160-189, 193-222, and 225-254; these read GKDQ…GGIL, SGYT…STNV, KGYF…SHSR, ENET…DPTI, KLET…NLMS, RKHT…DVSC, and EKGS…DANI. A disordered region spans residues 296–322; sequence EPVQEDATQETHISSPVESPSQKTKSE. A compositionally biased stretch (polar residues) spans 305–322; sequence ETHISSPVESPSQKTKSE. Phosphoserine occurs at positions 309, 310, 314, 353, and 364. 3 disordered regions span residues 367 to 400, 474 to 514, and 558 to 623; these read ELGK…NTCG, APSP…PDTA, and SFTA…ENPF. Residues 371–384 show a composition bias toward polar residues; the sequence is NGSQSVRTSSTINL. The segment covering 388 to 397 has biased composition (acidic residues); the sequence is EVEEEDDDEN. Thr503 bears the Phosphothreonine mark. Phosphoserine is present on residues Ser507 and Ser510. Residues 558–575 are compositionally biased toward low complexity; sequence SFTASPPASPPTSSVGTT. The span at 577–601 shows a compositional bias: basic and acidic residues; it reads VKNEGTNHTDDLSRQDDNDPPKEYD. Phosphoserine is present on Ser738. The interval 749–777 is disordered; sequence EKTSRVNWSESSTAEHSSKGNSERTPSFT. Over residues 753-763 the composition is skewed to polar residues; it reads RVNWSESSTAE. Thr773 is subject to Phosphothreonine. At Ser775 the chain carries Phosphoserine. 2 consecutive SAM domains span residues 810-876 and 884-949; these read CPVQ…LPKM and YHPT…RLHD. Position 901 is a phosphotyrosine (Tyr901). A Nuclear localization signal motif is present at residues 935–938; the sequence is HRKR. The interval 944–989 is disordered; that stretch reads GDRLHDDPPQKPPRSITLREPSGNHTPPQLSPSLSQSTYTTGGSLD. A compositionally biased stretch (low complexity) spans 969 to 984; that stretch reads TPPQLSPSLSQSTYTT. The residue at position 974 (Ser974) is a Phosphoserine. Tyr1007 is subject to Phosphotyrosine. Residues 1056 to 1213 enclose the PID domain; sequence IFQSCDYKAF…SFENKPSKPI (158 aa). The interval 1197–1248 is disordered; the sequence is HSSTLPESFENKPSKPIPKPRVSIRKSVDLLHASHTGQEPSERHTEEALRKF. Basic and acidic residues predominate over residues 1236–1248; sequence PSERHTEEALRKF.

In terms of assembly, isoform 3 interacts with DLG4. Interacts with EPHA8. Isoform 2 interacts with COIL. Isoform 4 interacts with APP and EPHA8. Isoform 6 interacts with EPHA8. Post-translationally, isoform 3 nuclear translocation requires an NMDAR-dependent proteolytic cleavage. In terms of tissue distribution, highly expressed in marrow from patients with pre-B ALL associated with the t(1;19) translocation. Strongly expressed in brain and testis. Expressed in fetal brain. Isoform 4 is highly expressed in brain (at protein level). Isoform 6 is expressed in brain and several cancer cell lines.

It localises to the cytoplasm. The protein localises to the nucleus. Its subcellular location is the postsynaptic density. The protein resides in the cell projection. It is found in the dendritic spine. It localises to the cajal body. In terms of biological role, isoform 2 may participate in the regulation of nucleoplasmic coilin protein interactions in neuronal and transformed cells. Functionally, isoform 3 can regulate global protein synthesis by altering nucleolar numbers. Its function is as follows. Isoform 4 may play a role as a modulator of APP processing. Overexpression can down-regulate APP processing. In Homo sapiens (Human), this protein is Ankyrin repeat and sterile alpha motif domain-containing protein 1B (ANKS1B).